The following is a 358-amino-acid chain: Alanine racemase (358 aa).

Lys-34 (proton acceptor; specific for D-alanine) is an active-site residue. Lys-34 bears the N6-(pyridoxal phosphate)lysine mark. Residue Arg-130 participates in substrate binding. Tyr-254 acts as the Proton acceptor; specific for L-alanine in catalysis. Residue Met-302 coordinates substrate.

It belongs to the alanine racemase family. Requires pyridoxal 5'-phosphate as cofactor.

It carries out the reaction L-alanine = D-alanine. It functions in the pathway amino-acid biosynthesis; D-alanine biosynthesis; D-alanine from L-alanine: step 1/1. In terms of biological role, catalyzes the interconversion of L-alanine and D-alanine. May also act on other amino acids. The polypeptide is Alanine racemase (alr) (Stutzerimonas stutzeri (strain A1501) (Pseudomonas stutzeri)).